The chain runs to 784 residues: Ribosome biogenesis protein BOP1 homolog (784 aa).

Over residues Met-1–Gly-11 the composition is skewed to basic residues. A disordered region spans residues Met-1 to Ile-159. Composition is skewed to acidic residues over residues Ser-27–Leu-36, Glu-45–Asp-54, Ser-62–Gly-73, and Ala-84–Glu-111. A compositionally biased stretch (basic and acidic residues) spans Lys-112–Pro-123. Positions Ser-124–Ala-133 are enriched in low complexity. The segment covering Leu-138 to Tyr-148 has biased composition (basic and acidic residues). The segment covering Gln-149–Asp-158 has biased composition (acidic residues). WD repeat units lie at residues Gly-445–Glu-486, Asp-488–Val-526, Thr-570–Pro-612, Lys-615–Lys-653, Thr-656–Gln-695, Leu-699–Gln-738, and Arg-754–Thr-784.

This sequence belongs to the WD repeat BOP1/ERB1 family.

The protein resides in the nucleus. It localises to the nucleolus. Its subcellular location is the nucleoplasm. Functionally, required for maturation of ribosomal RNAs and formation of the large ribosomal subunit. This chain is Ribosome biogenesis protein BOP1 homolog, found in Drosophila erecta (Fruit fly).